A 961-amino-acid polypeptide reads, in one-letter code: Retinoblastoma-related protein 1 (961 aa).

Residues 404 to 606 (TPVSTAMTTA…EKGSSMYNSL (203 aa)) are domain A. Positions 404–819 (TPVSTAMTTA…NEMFIPSVKP (416 aa)) are pocket. The interval 607–728 (AVAKPSLAAE…PGGGGETCAE (122 aa)) is spacer. Residues 729–819 (TAINVFFGKI…NEMFIPSVKP (91 aa)) form a domain B region. Positions 829–856 (NAEKNNHNDGQGPASPKPSPFPKLPDMS) are disordered.

The protein belongs to the retinoblastoma protein (RB) family.

It is found in the nucleus. Functionally, regulator of biological processes that recruits a histone deacetylase to control gene transcription. May play a role in the entry into mitosis, negatively regulating the cell proliferation. Formation of stable complexes with geminiviridae replication-associated proteins may create a cellular environment which favors viral DNA replication. The protein is Retinoblastoma-related protein 1 (RB1) of Nicotiana tabacum (Common tobacco).